Consider the following 296-residue polypeptide: Ribonuclease HIII (296 aa).

Residues 81–296 form the RNase H type-2 domain; sequence QAMIGTDEVG…TQKAKQLLER (216 aa). Residues D87, E88, and D190 each contribute to the a divalent metal cation site.

The protein belongs to the RNase HII family. RnhC subfamily. The cofactor is Mn(2+). Mg(2+) is required as a cofactor.

It localises to the cytoplasm. The catalysed reaction is Endonucleolytic cleavage to 5'-phosphomonoester.. In terms of biological role, endonuclease that specifically degrades the RNA of RNA-DNA hybrids. The polypeptide is Ribonuclease HIII (Streptococcus gordonii (strain Challis / ATCC 35105 / BCRC 15272 / CH1 / DL1 / V288)).